Reading from the N-terminus, the 1481-residue chain is Protein shortage in chiasmata 1 ortholog (1481 aa).

Disordered regions lie at residues 479-498 and 512-560; these read TDVHQLHPQKRPIPSSEKEV and KSKV…IQAS. Positions 513–531 are enriched in basic and acidic residues; that stretch reads SKVEANPKNDQEPEARIMQ. Low complexity predominate over residues 543–560; it reads SSQVPSAESASSSQIQAS.

It belongs to the XPF family. Highly divergent. As to quaternary structure, interacts with TEX11. Interacts with SPO16. As to expression, mainly expressed in adult testis.

It localises to the chromosome. ATPase required during meiosis for the formation of crossover recombination intermediates. Binds DNA: preferentially binds to single-stranded DNA and DNA branched structures. Does not show nuclease activity in vitro, but shows ATPase activity, which is stimulated by the presence of single-stranded DNA. Plays a key role in homologous recombination and crossing-over in meiotic prophase I in male and female germ cells. Required for proper synaptonemal complex assembly and homologous chromosome pairing. Required for recruitment of TEX11 and MSH4 to recombination intermediates. The protein is Protein shortage in chiasmata 1 ortholog of Mus musculus (Mouse).